Reading from the N-terminus, the 845-residue chain is Translation initiation factor IF-2 (845 aa).

2 disordered regions span residues 44–91 (KRRK…NLSS) and 119–256 (ARRA…NQEP). Residues 119 to 129 (ARRAKEREESL) are compositionally biased toward basic and acidic residues. Acidic residues predominate over residues 139–148 (DETPQEEEEP). Positions 156 to 165 (SLSPAQSQIE) are enriched in polar residues. 2 stretches are compositionally biased toward basic and acidic residues: residues 179–194 (IEKR…DRNS) and 202–217 (SEVR…DEKR). The region spanning 343–510 (LRPPVVTIMG…AILLQAEILD (168 aa)) is the tr-type G domain. The G1 stretch occupies residues 352–359 (GHVDHGKT). 352 to 359 (GHVDHGKT) provides a ligand contact to GTP. The tract at residues 377 to 381 (GITQH) is G2. Positions 398 to 401 (DTPG) are G3. GTP contacts are provided by residues 398 to 402 (DTPGH) and 452 to 455 (NKID). The segment at 452–455 (NKID) is G4. The tract at residues 488 to 490 (SAK) is G5.

Belongs to the TRAFAC class translation factor GTPase superfamily. Classic translation factor GTPase family. IF-2 subfamily.

Its subcellular location is the cytoplasm. In terms of biological role, one of the essential components for the initiation of protein synthesis. Protects formylmethionyl-tRNA from spontaneous hydrolysis and promotes its binding to the 30S ribosomal subunits. Also involved in the hydrolysis of GTP during the formation of the 70S ribosomal complex. This Bartonella henselae (strain ATCC 49882 / DSM 28221 / CCUG 30454 / Houston 1) (Rochalimaea henselae) protein is Translation initiation factor IF-2.